Consider the following 515-residue polypeptide: Histidine ammonia-lyase (515 aa).

Residues 142 to 144 constitute a cross-link (5-imidazolinone (Ala-Gly)); it reads ASG. Serine 143 bears the 2,3-didehydroalanine (Ser) mark.

The protein belongs to the PAL/histidase family. In terms of processing, contains an active site 4-methylidene-imidazol-5-one (MIO), which is formed autocatalytically by cyclization and dehydration of residues Ala-Ser-Gly.

The protein localises to the cytoplasm. It carries out the reaction L-histidine = trans-urocanate + NH4(+). Its pathway is amino-acid degradation; L-histidine degradation into L-glutamate; N-formimidoyl-L-glutamate from L-histidine: step 1/3. In Bradyrhizobium sp. (strain BTAi1 / ATCC BAA-1182), this protein is Histidine ammonia-lyase.